Consider the following 823-residue polypeptide: MESVESAARDYRETLAELRNNNKTQINLLTILADDFKKAAPQIVEVIERHLTTCSPSQKLLVMYVCDSILKNVKKPNDYDALFARKIVSMFEHAFRQGDERIRTSLYRIRVTWASTTLFMPSKLYELDMKINKLDPNWPISNPQTGRALRDDPQVMAPSQSRPAGNATSPAASTSTNRVFVNPKFIGSSTPGAASASKTVVEKTKSPGTVNKEKQVKKEPKQDPLDKLLPSSSASKTSSSPAGLKRKSAPSEHPNAPIRKKPQQPPKPQTAIDEDLRSISLTKKPPVPSAQDQDFRPKTLKPTSVIGSHAFAPVAAPIRPMIPVPPPVSVAPFVPAPPLSSAPPFQHPQQHHPQLPPPPVHQGMGRGYHHNSPPQDPAPIVPVQAPPPQQHLPAPENVYSSEQPKLDVPANNRIFVDGKAYEVMFVDDTAVIERGGAPHRIYFAGPPRNLVIDGIPHLLQFDTPTQIDILGSKHMVKFGAPSRELYIGGHPFKGQFGGPPIIATINGRRHEIRLTGSAPEVRIEPEPAYHLTHFLHKMREEKKIEIASEKPEKKEDWLSYLKNLRTRNILPAPARSPSSPRNQTPPPANLPIPGMNNAGQRGGYHNRHQPQQNARWGGANKQQNIPPPPSDPSPIGSGVEKRSAPPAAITDFNIRLLQIRYDSVVDALITKRADACKFCGMRLDDSQGKSKEWQDHMDWHVKQNLARHGSNNSAAVPYRQWYPSTSTWLTPRASDETNEQEADKPEEPLPGVASSGVKTKECSVCGEKFDEYYDDDEETWRLRDTVNVHGKIVHSACASDAARSLDNSSFFNDSDIKKEEPFD.

Positions serine 3–aspartate 135 constitute a CID domain. Disordered stretches follow at residues asparagine 142–threonine 176, serine 188–lysine 301, serine 340–proline 395, leucine 570–serine 643, and tryptophan 728–serine 755. Polar residues-rich tracts occupy residues alanine 157–threonine 176 and serine 188–lysine 198. The span at valine 200–aspartate 226 shows a compositional bias: basic and acidic residues. Low complexity-rich tracts occupy residues lysine 227 to alanine 242 and alanine 342 to proline 353. Residues proline 374–glutamine 390 are compositionally biased toward pro residues. Positions proline 571–arginine 581 are enriched in low complexity. Polar residues predominate over residues glutamine 609 to asparagine 624.

This is Polyadenylation and cleavage factor homolog 11 (pcf-11) from Caenorhabditis elegans.